We begin with the raw amino-acid sequence, 130 residues long: Small ribosomal subunit protein uS8x (130 aa).

Belongs to the universal ribosomal protein uS8 family.

This Arabidopsis thaliana (Mouse-ear cress) protein is Small ribosomal subunit protein uS8x (RPS15AD).